The sequence spans 215 residues: Probable serine/threonine-protein kinase 2 (215 aa).

The 205-residue stretch at 1–205 (MKPEQLVYLN…WLLKEMEQLL (205 aa)) folds into the Protein kinase domain.

It belongs to the protein kinase superfamily. Ser/Thr protein kinase family. In terms of assembly, interacts with the kinase domain of host EIF2AK2.

Its subcellular location is the host cytoplasm. It catalyses the reaction L-seryl-[protein] + ATP = O-phospho-L-seryl-[protein] + ADP + H(+). The enzyme catalyses L-threonyl-[protein] + ATP = O-phospho-L-threonyl-[protein] + ADP + H(+). Its function is as follows. Plays a role in the inhibition of host eIF2alpha/EIF2S1 phosphorylation, thereby increasing viral fitness. In the insect host, targets the endogenous insect heme-regulated inhibitor (HRI)-like eIF2alpha kinase. This Autographa californica nuclear polyhedrosis virus (AcMNPV) protein is Probable serine/threonine-protein kinase 2 (PK2).